Reading from the N-terminus, the 193-residue chain is Fe/S biogenesis protein NfuA (193 aa).

Residues Cys-149 and Cys-152 each contribute to the [4Fe-4S] cluster site.

It belongs to the NfuA family. As to quaternary structure, homodimer. [4Fe-4S] cluster serves as cofactor.

Involved in iron-sulfur cluster biogenesis. Binds a 4Fe-4S cluster, can transfer this cluster to apoproteins, and thereby intervenes in the maturation of Fe/S proteins. Could also act as a scaffold/chaperone for damaged Fe/S proteins. The chain is Fe/S biogenesis protein NfuA from Psychromonas ingrahamii (strain DSM 17664 / CCUG 51855 / 37).